We begin with the raw amino-acid sequence, 1207 residues long: DNA-directed RNA polymerase subunit beta' (1207 aa).

Positions 60, 62, 75, and 78 each coordinate Zn(2+). Residues D449, D451, and D453 each coordinate Mg(2+). Residues C822, C896, C903, and C906 each contribute to the Zn(2+) site.

It belongs to the RNA polymerase beta' chain family. As to quaternary structure, the RNAP catalytic core consists of 2 alpha, 1 beta, 1 beta' and 1 omega subunit. When a sigma factor is associated with the core the holoenzyme is formed, which can initiate transcription. It depends on Mg(2+) as a cofactor. Requires Zn(2+) as cofactor.

The catalysed reaction is RNA(n) + a ribonucleoside 5'-triphosphate = RNA(n+1) + diphosphate. DNA-dependent RNA polymerase catalyzes the transcription of DNA into RNA using the four ribonucleoside triphosphates as substrates. The chain is DNA-directed RNA polymerase subunit beta' from Staphylococcus saprophyticus subsp. saprophyticus (strain ATCC 15305 / DSM 20229 / NCIMB 8711 / NCTC 7292 / S-41).